The primary structure comprises 369 residues: Anhydro-N-acetylmuramic acid kinase (369 aa).

12-19 (GTSMDGVD) contributes to the ATP binding site.

This sequence belongs to the anhydro-N-acetylmuramic acid kinase family.

It carries out the reaction 1,6-anhydro-N-acetyl-beta-muramate + ATP + H2O = N-acetyl-D-muramate 6-phosphate + ADP + H(+). It participates in amino-sugar metabolism; 1,6-anhydro-N-acetylmuramate degradation. The protein operates within cell wall biogenesis; peptidoglycan recycling. Functionally, catalyzes the specific phosphorylation of 1,6-anhydro-N-acetylmuramic acid (anhMurNAc) with the simultaneous cleavage of the 1,6-anhydro ring, generating MurNAc-6-P. Is required for the utilization of anhMurNAc either imported from the medium or derived from its own cell wall murein, and thus plays a role in cell wall recycling. This is Anhydro-N-acetylmuramic acid kinase from Shewanella sp. (strain ANA-3).